We begin with the raw amino-acid sequence, 270 residues long: UPF0246 protein Psyc_0554 (270 aa).

The protein belongs to the UPF0246 family.

The polypeptide is UPF0246 protein Psyc_0554 (Psychrobacter arcticus (strain DSM 17307 / VKM B-2377 / 273-4)).